Reading from the N-terminus, the 212-residue chain is Octanoyltransferase (212 aa).

A BPL/LPL catalytic domain is found at 30-205 (ETTVDELWCL…ELVEGLGHSQ (176 aa)). Substrate-binding positions include 69 to 76 (RGGQVTYH), 136 to 138 (SLG), and 149 to 151 (GLA). Cysteine 167 (acyl-thioester intermediate) is an active-site residue.

It belongs to the LipB family.

It localises to the cytoplasm. It catalyses the reaction octanoyl-[ACP] + L-lysyl-[protein] = N(6)-octanoyl-L-lysyl-[protein] + holo-[ACP] + H(+). It participates in protein modification; protein lipoylation via endogenous pathway; protein N(6)-(lipoyl)lysine from octanoyl-[acyl-carrier-protein]: step 1/2. Functionally, catalyzes the transfer of endogenously produced octanoic acid from octanoyl-acyl-carrier-protein onto the lipoyl domains of lipoate-dependent enzymes. Lipoyl-ACP can also act as a substrate although octanoyl-ACP is likely to be the physiological substrate. This chain is Octanoyltransferase, found in Marinobacter nauticus (strain ATCC 700491 / DSM 11845 / VT8) (Marinobacter aquaeolei).